Here is a 461-residue protein sequence, read N- to C-terminus: Argininosuccinate lyase (461 aa).

Belongs to the lyase 1 family. Argininosuccinate lyase subfamily.

It is found in the cytoplasm. The enzyme catalyses 2-(N(omega)-L-arginino)succinate = fumarate + L-arginine. The protein operates within amino-acid biosynthesis; L-arginine biosynthesis; L-arginine from L-ornithine and carbamoyl phosphate: step 3/3. This chain is Argininosuccinate lyase, found in Syntrophotalea carbinolica (strain DSM 2380 / NBRC 103641 / GraBd1) (Pelobacter carbinolicus).